Here is a 650-residue protein sequence, read N- to C-terminus: Macrolide export ATP-binding/permease protein MacB (650 aa).

The 240-residue stretch at 9–248 (IELIDLERVF…RPLGRPPGGA (240 aa)) folds into the ABC transporter domain. 45-52 (GQSGSGKS) lines the ATP pocket. The next 4 membrane-spanning stretches (helical) occupy residues 276–296 (ALTLLGVVIGVAAVVTMMAIG), 525–545 (LTLLLGAVALISLLVGGIGVM), 580–600 (AVAVCGVGGLAGVGLGLGAAL), and 615–635 (PPIVAFCCAFLTGLLFGYLPA).

Belongs to the ABC transporter superfamily. Macrolide exporter (TC 3.A.1.122) family. Homodimer.

The protein resides in the cell inner membrane. Its function is as follows. Non-canonical ABC transporter that contains transmembrane domains (TMD), which form a pore in the inner membrane, and an ATP-binding domain (NBD), which is responsible for energy generation. Confers resistance against macrolides. This is Macrolide export ATP-binding/permease protein MacB from Rhodospirillum rubrum (strain ATCC 11170 / ATH 1.1.1 / DSM 467 / LMG 4362 / NCIMB 8255 / S1).